The following is a 341-amino-acid chain: Holliday junction branch migration complex subunit RuvB (341 aa).

The segment at 1–182 is large ATPase domain (RuvB-L); the sequence is MTERFVTPDF…FGVICRLEFY (182 aa). ATP-binding positions include Leu-21, Arg-22, Gly-63, Lys-66, Thr-67, Thr-68, 129 to 131, Arg-172, Tyr-182, and Arg-219; that span reads EDY. Residue Thr-67 participates in Mg(2+) binding. Residues 183–253 are small ATPAse domain (RuvB-S); sequence TDDELATIAG…IADMALSRLE (71 aa). The head domain (RuvB-H) stretch occupies residues 256-341; the sequence is NCGLDHMDRL…RGKTSGELFS (86 aa). Arg-311 and Arg-316 together coordinate DNA.

Belongs to the RuvB family. In terms of assembly, homohexamer. Forms an RuvA(8)-RuvB(12)-Holliday junction (HJ) complex. HJ DNA is sandwiched between 2 RuvA tetramers; dsDNA enters through RuvA and exits via RuvB. An RuvB hexamer assembles on each DNA strand where it exits the tetramer. Each RuvB hexamer is contacted by two RuvA subunits (via domain III) on 2 adjacent RuvB subunits; this complex drives branch migration. In the full resolvosome a probable DNA-RuvA(4)-RuvB(12)-RuvC(2) complex forms which resolves the HJ.

It is found in the cytoplasm. The enzyme catalyses ATP + H2O = ADP + phosphate + H(+). Functionally, the RuvA-RuvB-RuvC complex processes Holliday junction (HJ) DNA during genetic recombination and DNA repair, while the RuvA-RuvB complex plays an important role in the rescue of blocked DNA replication forks via replication fork reversal (RFR). RuvA specifically binds to HJ cruciform DNA, conferring on it an open structure. The RuvB hexamer acts as an ATP-dependent pump, pulling dsDNA into and through the RuvAB complex. RuvB forms 2 homohexamers on either side of HJ DNA bound by 1 or 2 RuvA tetramers; 4 subunits per hexamer contact DNA at a time. Coordinated motions by a converter formed by DNA-disengaged RuvB subunits stimulates ATP hydrolysis and nucleotide exchange. Immobilization of the converter enables RuvB to convert the ATP-contained energy into a lever motion, pulling 2 nucleotides of DNA out of the RuvA tetramer per ATP hydrolyzed, thus driving DNA branch migration. The RuvB motors rotate together with the DNA substrate, which together with the progressing nucleotide cycle form the mechanistic basis for DNA recombination by continuous HJ branch migration. Branch migration allows RuvC to scan DNA until it finds its consensus sequence, where it cleaves and resolves cruciform DNA. The protein is Holliday junction branch migration complex subunit RuvB of Syntrophotalea carbinolica (strain DSM 2380 / NBRC 103641 / GraBd1) (Pelobacter carbinolicus).